Here is a 716-residue protein sequence, read N- to C-terminus: Splicing factor Cactin (716 aa).

The disordered stretch occupies residues 1–104 (MGSHGKGKRD…SKKAQKKALR (104 aa)). The span at 10–22 (DRSGRQKKRRDES) shows a compositional bias: basic and acidic residues. Positions 25–45 (GSESESYTSDSDGSDDLSPPR) are enriched in low complexity. Over residues 46 to 61 (SSRRKKGSSSRRTRRR) the composition is skewed to basic residues. A compositionally biased stretch (basic and acidic residues) spans 81–95 (SSKDYSEEKVTEYMS). A coiled-coil region spans residues 153-201 (SVKAEKRRHRERMTEVEKVKKRREERAVEKARHEEEMALLARERARAEF). At Ser450 the chain carries Phosphoserine. The segment at 466-525 (VEENEEEINDTNLSDAEEAFSPEPVAEEEEADEAAEAAGSFSPELMHGDDREEAIDPEED) is disordered. Positions 468–500 (ENEEEINDTNLSDAEEAFSPEPVAEEEEADEAA) are enriched in acidic residues.

The protein belongs to the CACTIN family. In terms of assembly, interacts with At5g63440.

It is found in the nucleus speckle. Its function is as follows. Plays a role in pre-mRNA splicing by facilitating excision of a subset of introns. Required for embryogenesis. In Arabidopsis thaliana (Mouse-ear cress), this protein is Splicing factor Cactin (CTN).